The primary structure comprises 71 residues: Protein PSY2 (71 aa).

The N-terminal stretch at 1–20 is a signal peptide; the sequence is MSFGTRLLLFLILTLPLVTS. A propeptide spanning residues 21–46 is cleaved from the precursor; the sequence is SSPNTLHVSGIVKTGTTSRFLMMTIE. Tyrosine 48 carries the post-translational modification Sulfotyrosine. The disordered stretch occupies residues 50 to 71; that stretch reads DPSANTRHDPSVPTNAKADTTP. The span at 61 to 71 shows a compositional bias: polar residues; that stretch reads VPTNAKADTTP. Proline 62 carries the 4-hydroxyproline modification. Proline 62 is a glycosylation site (O-linked (Ara...) hydroxyproline). The propeptide occupies 65–71; it reads AKADTTP.

The protein belongs to the sulfated-peptide plant hormone family. In terms of processing, the sulfation and the glycosylation are required for full activity.

The protein resides in the secreted. Promotes cellular proliferation and expansion. In Arabidopsis thaliana (Mouse-ear cress), this protein is Protein PSY2 (PSY2).